A 293-amino-acid polypeptide reads, in one-letter code: MNFVTTLTYLLPHRMLSSLARHVAYCQHPLIKQWLIDTVIAKFDVNLSEAAEPDAHAYPSFNAFFTRSLKAGIRPPDPNPDTLLMPADGRISQLGPIREGRIFQAKGQSFTATELLGDTAAASAFTNGLFATVYLSPRDYHRVHMPCTGQLLKTVHVPGRLFSVGPDAVRQIPRLFARNERLVCHFDTTFGPMVLVMVGALLVSGVETVWGGVEIPAYGDRITYKDYQGRNIAIERFAEMARFNYGSTVIVLLPPNVLTLAPHLTAESPVTLGQALAHRLSLNHSTQAPTQEK.

Catalysis depends on charge relay system; for autoendoproteolytic cleavage activity residues D88, H144, and S247. Catalysis depends on S247, which acts as the Schiff-base intermediate with substrate; via pyruvic acid; for decarboxylase activity. At S247 the chain carries Pyruvic acid (Ser); by autocatalysis.

The protein belongs to the phosphatidylserine decarboxylase family. PSD-B subfamily. Prokaryotic type I sub-subfamily. Heterodimer of a large membrane-associated beta subunit and a small pyruvoyl-containing alpha subunit. Pyruvate serves as cofactor. Is synthesized initially as an inactive proenzyme. Formation of the active enzyme involves a self-maturation process in which the active site pyruvoyl group is generated from an internal serine residue via an autocatalytic post-translational modification. Two non-identical subunits are generated from the proenzyme in this reaction, and the pyruvate is formed at the N-terminus of the alpha chain, which is derived from the carboxyl end of the proenzyme. The autoendoproteolytic cleavage occurs by a canonical serine protease mechanism, in which the side chain hydroxyl group of the serine supplies its oxygen atom to form the C-terminus of the beta chain, while the remainder of the serine residue undergoes an oxidative deamination to produce ammonia and the pyruvoyl prosthetic group on the alpha chain. During this reaction, the Ser that is part of the protease active site of the proenzyme becomes the pyruvoyl prosthetic group, which constitutes an essential element of the active site of the mature decarboxylase.

The protein localises to the cell membrane. It catalyses the reaction a 1,2-diacyl-sn-glycero-3-phospho-L-serine + H(+) = a 1,2-diacyl-sn-glycero-3-phosphoethanolamine + CO2. Its pathway is phospholipid metabolism; phosphatidylethanolamine biosynthesis; phosphatidylethanolamine from CDP-diacylglycerol: step 2/2. Functionally, catalyzes the formation of phosphatidylethanolamine (PtdEtn) from phosphatidylserine (PtdSer). In Xylella fastidiosa (strain M23), this protein is Phosphatidylserine decarboxylase proenzyme.